Here is a 434-residue protein sequence, read N- to C-terminus: APETALA2-like protein 2 (434 aa).

The disordered stretch occupies residues Met1–Ser116. The segment covering Arg12–Ser23 has biased composition (low complexity). Residues Asp25–Leu38 are compositionally biased toward gly residues. The segment covering Leu72–Gln87 has biased composition (pro residues). Positions Val104–Arg113 are enriched in basic residues. Residues Lys106 to Arg115 carry the Nuclear localization signal motif. DNA-binding regions (AP2/ERF) lie at residues Gln118 to Asn174 and Lys210 to Glu267. The EAR motif lies at Leu291–Ile295.

It belongs to the AP2/ERF transcription factor family. AP2 subfamily. In terms of assembly, may form homodimer. Interacts with TPR2/ASP1. As to expression, highly expressed in developing panicles and in young seedlings. Present at low levels at all developmental stages.

It is found in the nucleus. Its function is as follows. Probable transcription factor. Involved in spikelet transition. Together with SNB, controls synergistically inflorescence architecture and floral meristem establishment via the regulation of spatio-temporal expression of B- and E-function floral organ identity genes in the lodicules and of spikelet meristem genes. Prevents lemma and palea elongation as well as grain growth. In Oryza sativa subsp. japonica (Rice), this protein is APETALA2-like protein 2.